The following is a 117-amino-acid chain: Large ribosomal subunit protein bL20c (117 aa).

This sequence belongs to the bacterial ribosomal protein bL20 family.

It localises to the plastid. The protein localises to the chloroplast. Functionally, binds directly to 23S ribosomal RNA and is necessary for the in vitro assembly process of the 50S ribosomal subunit. It is not involved in the protein synthesizing functions of that subunit. The polypeptide is Large ribosomal subunit protein bL20c (Platanus occidentalis (Sycamore)).